A 633-amino-acid chain; its full sequence is uncharacterized protein (633 aa).

Positions Glu12–Ser43 are disordered. A compositionally biased stretch (polar residues) spans Ser13–Pro29. A compositionally biased stretch (basic residues) spans Arg31–Arg42. Transmembrane regions (helical) follow at residues Ile99–Leu118 and Asn217–Cys233. Residues Asp593–Ser612 form a disordered region.

It localises to the membrane. This is an uncharacterized protein from Saccharomyces cerevisiae (strain ATCC 204508 / S288c) (Baker's yeast).